We begin with the raw amino-acid sequence, 336 residues long: Phenylalanine--tRNA ligase alpha subunit (336 aa).

A Mg(2+)-binding site is contributed by E251.

The protein belongs to the class-II aminoacyl-tRNA synthetase family. Phe-tRNA synthetase alpha subunit type 1 subfamily. In terms of assembly, tetramer of two alpha and two beta subunits. Requires Mg(2+) as cofactor.

It is found in the cytoplasm. It catalyses the reaction tRNA(Phe) + L-phenylalanine + ATP = L-phenylalanyl-tRNA(Phe) + AMP + diphosphate + H(+). The chain is Phenylalanine--tRNA ligase alpha subunit from Syntrophobacter fumaroxidans (strain DSM 10017 / MPOB).